We begin with the raw amino-acid sequence, 331 residues long: DNA polymerase IV (331 aa).

Positions phenylalanine 1 to glycine 174 constitute a UmuC domain. Aspartate 92 serves as a coordination point for Mg(2+). Residue glutamate 93 is part of the active site.

It belongs to the DNA polymerase type-Y family. As to quaternary structure, monomer. Requires Mg(2+) as cofactor.

Its subcellular location is the cytoplasm. The catalysed reaction is DNA(n) + a 2'-deoxyribonucleoside 5'-triphosphate = DNA(n+1) + diphosphate. Its function is as follows. Poorly processive, error-prone DNA polymerase involved in untargeted mutagenesis. Copies undamaged DNA at stalled replication forks, which arise in vivo from mismatched or misaligned primer ends. These misaligned primers can be extended by PolIV. Exhibits no 3'-5' exonuclease (proofreading) activity. May be involved in translesional synthesis, in conjunction with the beta clamp from PolIII. This is DNA polymerase IV from Escherichia fergusonii.